A 374-amino-acid chain; its full sequence is Glutamate 5-kinase (374 aa).

Residue Lys8 coordinates ATP. Ser49, Asp136, and Asn148 together coordinate substrate. ATP-binding positions include 168–169 and 211–217; these read TD and TGGMQTK. Positions 276–354 constitute a PUA domain; that stretch reads QGILTLDDGA…TQIRQILGYG (79 aa).

This sequence belongs to the glutamate 5-kinase family.

It localises to the cytoplasm. It carries out the reaction L-glutamate + ATP = L-glutamyl 5-phosphate + ADP. It participates in amino-acid biosynthesis; L-proline biosynthesis; L-glutamate 5-semialdehyde from L-glutamate: step 1/2. Functionally, catalyzes the transfer of a phosphate group to glutamate to form L-glutamate 5-phosphate. This Picosynechococcus sp. (strain ATCC 27264 / PCC 7002 / PR-6) (Agmenellum quadruplicatum) protein is Glutamate 5-kinase.